We begin with the raw amino-acid sequence, 128 residues long: Probable heavy metal-dependent transcriptional regulator HI_0293 (128 aa).

Residues 1-69 (MNISEAAKLV…LHQIAQLLAL (69 aa)) form the HTH merR-type domain. The H-T-H motif DNA-binding region spans 4-23 (SEAAKLVGLSTKQIRDYEKM).

The protein resides in the cytoplasm. In terms of biological role, could be a copper-dependent transcriptional activator of the ATPase HI_0290. This is Probable heavy metal-dependent transcriptional regulator HI_0293 from Haemophilus influenzae (strain ATCC 51907 / DSM 11121 / KW20 / Rd).